Reading from the N-terminus, the 380-residue chain is Erythronate-4-phosphate dehydrogenase (380 aa).

Residues S45 and T66 each coordinate substrate. Residues Q126–V127, D146, T174, A205–R207, and D231 contribute to the NAD(+) site. R207 is a catalytic residue. The active site involves E236. Catalysis depends on H253, which acts as the Proton donor. G256 contributes to the NAD(+) binding site. Residue Y257 participates in substrate binding.

The protein belongs to the D-isomer specific 2-hydroxyacid dehydrogenase family. PdxB subfamily. In terms of assembly, homodimer.

Its subcellular location is the cytoplasm. It carries out the reaction 4-phospho-D-erythronate + NAD(+) = (R)-3-hydroxy-2-oxo-4-phosphooxybutanoate + NADH + H(+). The protein operates within cofactor biosynthesis; pyridoxine 5'-phosphate biosynthesis; pyridoxine 5'-phosphate from D-erythrose 4-phosphate: step 2/5. Catalyzes the oxidation of erythronate-4-phosphate to 3-hydroxy-2-oxo-4-phosphonooxybutanoate. The polypeptide is Erythronate-4-phosphate dehydrogenase (Pseudomonas syringae pv. syringae (strain B728a)).